A 125-amino-acid polypeptide reads, in one-letter code: MPSKRRNNGRNKKNKGHADTVRCTNCGRVVSKDKAIKRFQQRNMVDASSKRDIQENYAYAQSDFTMPKIYVKLSYCVSCAIHARIVRVRSVEDRRHRYTTKLRQHVRPEAQTGNASLPLALLPKI.

Belongs to the eukaryotic ribosomal protein eS26 family.

In Sterkiella nova (Ciliate), this protein is Small ribosomal subunit protein eS26 (RPS26).